Reading from the N-terminus, the 98-residue chain is NADH-ubiquinone oxidoreductase chain 4L (98 aa).

The next 3 helical transmembrane spans lie at 1 to 21, 30 to 50, and 61 to 81; these read MSMVYANIFLAFIMSLMGLLV, LLCLEGMMLSLFVMMTVTILI, and IILLVFAACEAALGLSLLVMV.

The protein belongs to the complex I subunit 4L family. Core subunit of respiratory chain NADH dehydrogenase (Complex I) which is composed of 45 different subunits.

It localises to the mitochondrion inner membrane. The catalysed reaction is a ubiquinone + NADH + 5 H(+)(in) = a ubiquinol + NAD(+) + 4 H(+)(out). Its function is as follows. Core subunit of the mitochondrial membrane respiratory chain NADH dehydrogenase (Complex I) which catalyzes electron transfer from NADH through the respiratory chain, using ubiquinone as an electron acceptor. Part of the enzyme membrane arm which is embedded in the lipid bilayer and involved in proton translocation. The sequence is that of NADH-ubiquinone oxidoreductase chain 4L (MT-ND4L) from Pagophilus groenlandicus (Harp seal).